Here is a 396-residue protein sequence, read N- to C-terminus: 1-deoxy-D-xylulose 5-phosphate reductoisomerase (396 aa).

Residues threonine 15, glycine 16, serine 17, isoleucine 18, glycine 41, and asparagine 129 each contribute to the NADPH site. Lysine 130 provides a ligand contact to 1-deoxy-D-xylulose 5-phosphate. Glutamate 131 contacts NADPH. Aspartate 155 provides a ligand contact to Mn(2+). 1-deoxy-D-xylulose 5-phosphate-binding residues include serine 156, glutamate 157, serine 182, and histidine 205. Glutamate 157 serves as a coordination point for Mn(2+). Glycine 211 contacts NADPH. Residues serine 218, asparagine 223, lysine 224, and glutamate 227 each contribute to the 1-deoxy-D-xylulose 5-phosphate site. Glutamate 227 contacts Mn(2+).

This sequence belongs to the DXR family. Requires Mg(2+) as cofactor. It depends on Mn(2+) as a cofactor.

It carries out the reaction 2-C-methyl-D-erythritol 4-phosphate + NADP(+) = 1-deoxy-D-xylulose 5-phosphate + NADPH + H(+). The protein operates within isoprenoid biosynthesis; isopentenyl diphosphate biosynthesis via DXP pathway; isopentenyl diphosphate from 1-deoxy-D-xylulose 5-phosphate: step 1/6. Its function is as follows. Catalyzes the NADPH-dependent rearrangement and reduction of 1-deoxy-D-xylulose-5-phosphate (DXP) to 2-C-methyl-D-erythritol 4-phosphate (MEP). The protein is 1-deoxy-D-xylulose 5-phosphate reductoisomerase of Xanthomonas campestris pv. campestris (strain B100).